We begin with the raw amino-acid sequence, 402 residues long: Putative epoxide hydrolase AFT8 (402 aa).

The protein belongs to the peptidase S33 family.

It participates in mycotoxin biosynthesis. Functionally, putative epoxide hydrolase; part of the gene clusters that mediate the biosynthesis of the host-selective toxins (HSTs) AF-toxins responsible for Alternaria black spot of strawberry disease by the strawberry pathotype. AF-toxin I and III are valine derivatives of 2,3-dyhydroxy-isovaleric acid and 2-hydroxy-isovaleric acid respectively, while AF II is an isoleucine derivative of 2-hydroxy-valeric acid. These derivatives are bound to a 9,10-epoxy-8-hydroxy-9-methyl-decatrienoic acid (EDA) moiety. On cellular level, AF-toxins affect plasma membrane of susceptible cells and cause a sudden increase in loss of K(+) after a few minutes of toxin treatment. The aldo-keto reductase AFTS1 catalyzes the conversion of 2-keto-isovaleric acid (2-KIV) to 2-hydroxy-isovaleric acid (2-HIV) by reduction of its ketone to an alcohol. The acyl-CoA ligase AFT1, the hydrolase AFT2 and the enoyl-CoA hydratases AFT3 and AFT6, but also the polyketide synthase AFT9, the acyl-CoA dehydrogenase AFT10, the cytochrome P450 monooxygenase AFT11 and the oxidoreductase AFT12 are all involved in the biosynthesis of the AK-, AF- and ACT-toxin common EDA structural moiety. The exact function of each enzyme, and of additional enzymes identified within the AF-toxin clusters have still to be determined. This is Putative epoxide hydrolase AFT8 from Alternaria alternata (Alternaria rot fungus).